Here is a 329-residue protein sequence, read N- to C-terminus: Biotin synthase (329 aa).

The Radical SAM core domain occupies 48–278 (FVGDKVYLCS…SKKISVCGGR (231 aa)). [4Fe-4S] cluster is bound by residues C66, C70, and C73. [2Fe-2S] cluster contacts are provided by S143 and C203.

This sequence belongs to the radical SAM superfamily. Biotin synthase family. Homodimer. [4Fe-4S] cluster is required as a cofactor. Requires [2Fe-2S] cluster as cofactor.

The catalysed reaction is (4R,5S)-dethiobiotin + (sulfur carrier)-SH + 2 reduced [2Fe-2S]-[ferredoxin] + 2 S-adenosyl-L-methionine = (sulfur carrier)-H + biotin + 2 5'-deoxyadenosine + 2 L-methionine + 2 oxidized [2Fe-2S]-[ferredoxin]. It participates in cofactor biosynthesis; biotin biosynthesis; biotin from 7,8-diaminononanoate: step 2/2. Catalyzes the conversion of dethiobiotin (DTB) to biotin by the insertion of a sulfur atom into dethiobiotin via a radical-based mechanism. The polypeptide is Biotin synthase (Geotalea uraniireducens (strain Rf4) (Geobacter uraniireducens)).